A 262-amino-acid polypeptide reads, in one-letter code: Tetratricopeptide repeat protein 33 (262 aa).

3 TPR repeats span residues 59–92, 93–126, and 127–160; these read SKQLKDEGASLAENKRYREAIQKWDEALQLTPND, ATLYEMKSQVLMSLHEMFPAVHAAEMAVQQNPHS, and WESWQTLGRAQLGLGEIILAIRSFQVALHIYPMN. Serine 197 bears the Phosphoserine mark. Threonine 251 bears the Phosphothreonine mark.

In Homo sapiens (Human), this protein is Tetratricopeptide repeat protein 33 (TTC33).